Reading from the N-terminus, the 268-residue chain is Tetratricopeptide repeat protein 33 (268 aa).

Positions 14–34 (VSKQTVQQFEQDSEQADEDEV) are disordered. Residues 24-34 (QDSEQADEDEV) show a composition bias toward acidic residues. TPR repeat units follow at residues 60–93 (SKRL…TPED), 94–127 (AVLY…RPIW), and 128–161 (WEAW…HPSE). Residues 249–268 (EGDDNPTSSSQSVLIKARGL) form a disordered region.

The chain is Tetratricopeptide repeat protein 33 (ttc33) from Danio rerio (Zebrafish).